The following is a 624-amino-acid chain: Threonine--tRNA ligase (624 aa).

The segment at 1–143 (MRLLFIHADE…SRTVTPEAAE (143 aa)) is editing domain. The interval 197-499 (AHVKLMREKE…EQEGKLPTLP (303 aa)) is catalytic. Residues Cys-289, His-340, and His-467 each coordinate Zn(2+). The tract at residues 598 to 624 (LERETEGKPRVPLTIPDRLSRRPRFGR) is disordered.

The protein belongs to the class-II aminoacyl-tRNA synthetase family. As to quaternary structure, homodimer. It depends on Zn(2+) as a cofactor.

It is found in the cytoplasm. It catalyses the reaction tRNA(Thr) + L-threonine + ATP = L-threonyl-tRNA(Thr) + AMP + diphosphate + H(+). In terms of biological role, catalyzes the attachment of threonine to tRNA(Thr) in a two-step reaction: L-threonine is first activated by ATP to form Thr-AMP and then transferred to the acceptor end of tRNA(Thr). Also edits incorrectly charged L-seryl-tRNA(Thr). This Methanopyrus kandleri (strain AV19 / DSM 6324 / JCM 9639 / NBRC 100938) protein is Threonine--tRNA ligase.